Reading from the N-terminus, the 545-residue chain is Chaperonin GroEL 1 (545 aa).

ATP is bound by residues 29–32, 86–90, Gly413, 479–481, and Asp495; these read TLGP, DGTTT, and DAA. Residues 525–545 form a disordered region; the sequence is PEPKENNPAGSGAGMGGDFDY. Positions 535-545 are enriched in gly residues; the sequence is SGAGMGGDFDY.

It belongs to the chaperonin (HSP60) family. Forms a cylinder of 14 subunits composed of two heptameric rings stacked back-to-back. Interacts with the co-chaperonin GroES.

It is found in the cytoplasm. It carries out the reaction ATP + H2O + a folded polypeptide = ADP + phosphate + an unfolded polypeptide.. Its function is as follows. Together with its co-chaperonin GroES, plays an essential role in assisting protein folding. The GroEL-GroES system forms a nano-cage that allows encapsulation of the non-native substrate proteins and provides a physical environment optimized to promote and accelerate protein folding. The polypeptide is Chaperonin GroEL 1 (Thermostichus vulcanus (Synechococcus vulcanus)).